A 194-amino-acid chain; its full sequence is Crossover junction endodeoxyribonuclease RuvC (194 aa).

Residues Asp8, Glu72, and Asp144 contribute to the active site. 3 residues coordinate Mg(2+): Asp8, Glu72, and Asp144.

Belongs to the RuvC family. As to quaternary structure, homodimer which binds Holliday junction (HJ) DNA. The HJ becomes 2-fold symmetrical on binding to RuvC with unstacked arms; it has a different conformation from HJ DNA in complex with RuvA. In the full resolvosome a probable DNA-RuvA(4)-RuvB(12)-RuvC(2) complex forms which resolves the HJ. Mg(2+) serves as cofactor.

Its subcellular location is the cytoplasm. The catalysed reaction is Endonucleolytic cleavage at a junction such as a reciprocal single-stranded crossover between two homologous DNA duplexes (Holliday junction).. Its function is as follows. The RuvA-RuvB-RuvC complex processes Holliday junction (HJ) DNA during genetic recombination and DNA repair. Endonuclease that resolves HJ intermediates. Cleaves cruciform DNA by making single-stranded nicks across the HJ at symmetrical positions within the homologous arms, yielding a 5'-phosphate and a 3'-hydroxyl group; requires a central core of homology in the junction. The consensus cleavage sequence is 5'-(A/T)TT(C/G)-3'. Cleavage occurs on the 3'-side of the TT dinucleotide at the point of strand exchange. HJ branch migration catalyzed by RuvA-RuvB allows RuvC to scan DNA until it finds its consensus sequence, where it cleaves and resolves the cruciform DNA. In Psychrobacter sp. (strain PRwf-1), this protein is Crossover junction endodeoxyribonuclease RuvC.